Consider the following 203-residue polypeptide: Cilia- and flagella-associated protein 20 (203 aa).

It belongs to the CFAP20 family.

Its subcellular location is the nucleus. It is found in the cytoplasm. The protein resides in the cytoskeleton. It localises to the microtubule organizing center. The protein localises to the centrosome. Its subcellular location is the centriole. It is found in the cilium basal body. The protein resides in the cilium axoneme. Its function is as follows. Cilium- and flagellum-specific protein that plays a role in axonemal structure organization and motility. Microtubule inner protein (MIP) part of the dynein-decorated doublet microtubules (DMTs) in cilia axoneme, which is required for motile cilia beating. Involved in the regulation of the size and morphology of cilia. Required for axonemal microtubules polyglutamylation. This chain is Cilia- and flagella-associated protein 20, found in Caenorhabditis elegans.